The sequence spans 460 residues: Putative RNA-guided DNA endonuclease MT2953 (460 aa).

Active-site residues include aspartate 224 and glutamate 313. 4 residues coordinate Zn(2+): cysteine 372, cysteine 375, cysteine 389, and cysteine 392. Aspartate 399 is an active-site residue. A disordered region spans residues 415 to 460 (VVGPVGAAVKRGADRKTGPGPAGGREARKATGHPAGEQPRDGVQVK).

The protein in the N-terminal section; belongs to the transposase 2 family. In the C-terminal section; belongs to the transposase 35 family.

Functionally, an RNA-guided dsDNA endonuclease. When guided by an RNA derived from the right-end element of its insertion sequence element (IS), cleaves DNA downstream of the transposon-associated motif (TAM). Cleaves supercoiled and linear DNA in a staggered manner 15-21 bases from the TAM yielding 5'-overhangs. Binds reRNA, an approximately 150 nucleotide base sRNA derived from the 3' end of its own gene, the right end (RE) of the insertion sequence (IS) plus sequence downstream of the IS. This is Putative RNA-guided DNA endonuclease MT2953 from Mycobacterium tuberculosis (strain CDC 1551 / Oshkosh).